The following is a 152-amino-acid chain: MTIWVDADACPNVIKEILYRAAERMQLPLVLVANQSLRVPPSRFIRTLRVAAGFDVADNEIVRQCEAGDLVITADIPLAAEAIEKGAAALNPRGERYTPATIRERLTMRDFMDTLRASGIQTGGPDSLSQRDRQAFAAELEKWWLEVQRSRG.

The protein belongs to the UPF0178 family.

In Escherichia coli O17:K52:H18 (strain UMN026 / ExPEC), this protein is UPF0178 protein YaiI.